Here is a 357-residue protein sequence, read N- to C-terminus: MDLANGVISAELLHAQAHVWNHIFNFIKSMSLKCAIQLGIPDIIHNHGKPMTLPELVAKLPVHPKRSQCVYRLMRILVHSGFLAAQRVQQGKEEEGYVLTDASRLLLMDDSLSIRPLVLAMLDPILTKPWHYLSAWFQNDDPTPFHTAYERSFWDYAGHEPQLNNSFNEAMASDARLLTSVLLKEGQGVFAGLNSLVDVGGGTGKVAKAIANAFPHLNCTVLDLSHVVAGLQGSKNLNYFAGDMFEAIPPADAILLKWILHDWSNEECVKILKRCREAIPSKENGGKVIIIDMIMMKNQGDYKSTETQLFFDMTMMIFAPGRERDENEWEKLFLDAGFSHYKITPILGLRSLIEVYP.

Residues Gly200, Asp223, Asp243, Met244, and Lys257 each contribute to the S-adenosyl-L-methionine site. His261 (proton acceptor) is an active-site residue.

Belongs to the class I-like SAM-binding methyltransferase superfamily. Cation-independent O-methyltransferase family. COMT subfamily.

The catalysed reaction is trans-resveratrol + 2 S-adenosyl-L-methionine = pterostilbene + 2 S-adenosyl-L-homocysteine + 2 H(+). In terms of biological role, catalyzes the biosynthesis of pterostilbene from resveratrol. Pterostilbene has both antifungal and pharmacological properties. Also has activity toward resveratrol monomethyl ether (RME). In Vitis vinifera (Grape), this protein is Trans-resveratrol di-O-methyltransferase (ROMT).